The following is a 1327-amino-acid chain: uncharacterized protein (1327 aa).

Position 884–885 (884–885 (WD)) interacts with substrate. The active-site Proton donor is glutamate 1023. 1143–1144 (KQ) is a substrate binding site.

In the N-terminal section; belongs to the trehalose phosphatase family. It in the C-terminal section; belongs to the glycosyl hydrolase 65 family.

This is an uncharacterized protein from Mycobacterium tuberculosis (strain CDC 1551 / Oshkosh).